A 321-amino-acid chain; its full sequence is Cathepsin O (321 aa).

Residues 1 to 23 (MDVRALPWLPWLLWLLCRGGGDA) form the signal peptide. The propeptide at 24 to 107 (DSRAPFTPTW…EVHMSIPNVS (84 aa)) is activation peptide. Asn62 and Asn105 each carry an N-linked (GlcNAc...) asparagine glycan. 3 disulfide bridges follow: Cys129–Cys170, Cys163–Cys204, and Cys262–Cys310. Residue Cys132 is part of the active site. Active-site residues include His269 and Asn289.

The protein belongs to the peptidase C1 family. In terms of tissue distribution, expressed in all tissues examined. High levels seen in the ovary, kidney and placenta while low levels seen in thymus and skeletal muscle.

It localises to the lysosome. It catalyses the reaction The recombinant human enzyme hydrolyzes synthetic endopeptidase substrates including Z-Phe-Arg-NHMec and Z-Arg-Arg-NHMec.. Proteolytic enzyme possibly involved in normal cellular protein degradation and turnover. The sequence is that of Cathepsin O (CTSO) from Homo sapiens (Human).